The primary structure comprises 212 residues: Acyl-homoserine-lactone synthase (212 aa).

Belongs to the autoinducer synthase family.

The catalysed reaction is a fatty acyl-[ACP] + S-adenosyl-L-methionine = an N-acyl-L-homoserine lactone + S-methyl-5'-thioadenosine + holo-[ACP] + H(+). In terms of biological role, required for the synthesis of OHHL (N-(3-oxohexanoyl)-L-homoserine lactone), an autoinducer molecule which binds to the EchR transcriptional regulator. This chain is Acyl-homoserine-lactone synthase (echI), found in Dickeya chrysanthemi (Pectobacterium chrysanthemi).